The sequence spans 195 residues: UPF0314 protein RHECIAT_CH0004233 (195 aa).

4 helical membrane passes run 15–35, 64–84, 127–147, and 150–170; these read FWFVACVAVLVAQIVTEYLMG, WYTPSHIIHGFLFYGLGYLIL, GDSILNSAMDTVFMCVGFFFA, and APVALTVAIAIFFEIFTGYVI.

The protein belongs to the UPF0314 family.

The protein resides in the cell membrane. This chain is UPF0314 protein RHECIAT_CH0004233, found in Rhizobium etli (strain CIAT 652).